Reading from the N-terminus, the 164-residue chain is MFSKTLVVLAAVAAVTVNGLTAKECQDAFTGEVAKLTTGALPLVQPCSSDSGFSMVPPTGLPTDDQYVKMCASKNCKALLEFIKGAGLKDCELNFGSIFPGSVPLNVYQLGQGFDAKCESISGGGSTPTTAPPSGTTPTTPTTAPPTGTTPGVTPSPTTPKPAC.

Positions 1–22 (MFSKTLVVLAAVAAVTVNGLTA) are cleaved as a signal peptide. Disulfide bonds link C25/C91, C47/C76, and C71/C118. Residues 121–164 (ISGGGSTPTTAPPSGTTPTTPTTAPPTGTTPGVTPSPTTPKPAC) are disordered. A compositionally biased stretch (low complexity) spans 127–156 (TPTTAPPSGTTPTTPTTAPPTGTTPGVTPS).

Belongs to the elicitin family.

It localises to the secreted. Its function is as follows. Induces local and distal defense responses (incompatible hypersensitive reaction) in plants from the solanaceae and cruciferae families. Elicits leaf necrosis and causes the accumulation of pathogenesis-related proteins. Might interact with the lipidic molecules of the plasma membrane. The chain is Elicitin-like protein 2 (POD-2) from Pythium oligandrum (Mycoparasitic fungus).